The primary structure comprises 129 residues: MAKTPVRARKRVKKQVVDGVAHIHASFNNTIVTITDRQGNALAWATAGGSGFRGSRKSTPFAAQVAAERCAEIVKEFGLKNLEVMVKGPGPGRESTIRALNAAGFRITNITDVTPIPHNGCRPPKKRRV.

Belongs to the universal ribosomal protein uS11 family. In terms of assembly, part of the 30S ribosomal subunit. Interacts with proteins S7 and S18. Binds to IF-3.

In terms of biological role, located on the platform of the 30S subunit, it bridges several disparate RNA helices of the 16S rRNA. Forms part of the Shine-Dalgarno cleft in the 70S ribosome. In Haemophilus influenzae (strain 86-028NP), this protein is Small ribosomal subunit protein uS11.